The sequence spans 61 residues: UPF0434 protein PSPTO_3844 (61 aa).

The protein belongs to the UPF0434 family.

This Pseudomonas syringae pv. tomato (strain ATCC BAA-871 / DC3000) protein is UPF0434 protein PSPTO_3844.